Consider the following 334-residue polypeptide: Glyceraldehyde-3-phosphate dehydrogenase (334 aa).

NAD(+)-binding positions include 10 to 11 (RI), Asp33, Lys77, and Thr119. Residues 149 to 151 (SCT), Thr180, 209 to 210 (TG), and Arg232 contribute to the D-glyceraldehyde 3-phosphate site. The active-site Nucleophile is Cys150. An NAD(+)-binding site is contributed by Asn314.

The protein belongs to the glyceraldehyde-3-phosphate dehydrogenase family. Homotetramer.

It localises to the cytoplasm. The enzyme catalyses D-glyceraldehyde 3-phosphate + phosphate + NAD(+) = (2R)-3-phospho-glyceroyl phosphate + NADH + H(+). The protein operates within carbohydrate degradation; glycolysis; pyruvate from D-glyceraldehyde 3-phosphate: step 1/5. Functionally, catalyzes the oxidative phosphorylation of glyceraldehyde 3-phosphate (G3P) to 1,3-bisphosphoglycerate (BPG) using the cofactor NAD. The first reaction step involves the formation of a hemiacetal intermediate between G3P and a cysteine residue, and this hemiacetal intermediate is then oxidized to a thioester, with concomitant reduction of NAD to NADH. The reduced NADH is then exchanged with the second NAD, and the thioester is attacked by a nucleophilic inorganic phosphate to produce BPG. The protein is Glyceraldehyde-3-phosphate dehydrogenase (gap) of Chlamydia trachomatis serovar D (strain ATCC VR-885 / DSM 19411 / UW-3/Cx).